Reading from the N-terminus, the 392-residue chain is Phosphoglycerate kinase (392 aa).

Residues 21–23, Arg36, 59–62, Arg113, and Arg146 each bind substrate; these read DLN and HLGR. ATP contacts are provided by residues Lys197, Glu319, and 345–348; that span reads GGDT.

It belongs to the phosphoglycerate kinase family. In terms of assembly, monomer.

Its subcellular location is the cytoplasm. It catalyses the reaction (2R)-3-phosphoglycerate + ATP = (2R)-3-phospho-glyceroyl phosphate + ADP. Its pathway is carbohydrate degradation; glycolysis; pyruvate from D-glyceraldehyde 3-phosphate: step 2/5. The sequence is that of Phosphoglycerate kinase from Alkalilimnicola ehrlichii (strain ATCC BAA-1101 / DSM 17681 / MLHE-1).